Reading from the N-terminus, the 197-residue chain is Pyridoxal 5'-phosphate synthase subunit PdxT (197 aa).

G53 to S55 contacts L-glutamine. Residue C85 is the Nucleophile of the active site. L-glutamine is bound by residues R114 and I142–R143. Residues H179 and E181 each act as charge relay system in the active site.

Belongs to the glutaminase PdxT/SNO family. In terms of assembly, in the presence of PdxS, forms a dodecamer of heterodimers. Only shows activity in the heterodimer.

The enzyme catalyses aldehydo-D-ribose 5-phosphate + D-glyceraldehyde 3-phosphate + L-glutamine = pyridoxal 5'-phosphate + L-glutamate + phosphate + 3 H2O + H(+). It catalyses the reaction L-glutamine + H2O = L-glutamate + NH4(+). Its pathway is cofactor biosynthesis; pyridoxal 5'-phosphate biosynthesis. Functionally, catalyzes the hydrolysis of glutamine to glutamate and ammonia as part of the biosynthesis of pyridoxal 5'-phosphate. The resulting ammonia molecule is channeled to the active site of PdxS. This is Pyridoxal 5'-phosphate synthase subunit PdxT from Pyrococcus furiosus (strain ATCC 43587 / DSM 3638 / JCM 8422 / Vc1).